Reading from the N-terminus, the 152-residue chain is MIALIQRVRRAEVRVADRVTGAIEAGLLALVCAERGDTEAAADRLLAKVLGYRVFSDAAGKMNLSVQNLDGAGRAGGLLLVSQFTLAADTNSGLRPSFTPAAPPDEGKRLFDYFVAAARAKHPVVETGEFGADMQVSLVNDGPVTFWLQTHA.

Residues Gly-142–Pro-143 carry the Gly-cisPro motif, important for rejection of L-amino acids motif.

It belongs to the DTD family. As to quaternary structure, homodimer.

It localises to the cytoplasm. The enzyme catalyses glycyl-tRNA(Ala) + H2O = tRNA(Ala) + glycine + H(+). It carries out the reaction a D-aminoacyl-tRNA + H2O = a tRNA + a D-alpha-amino acid + H(+). Functionally, an aminoacyl-tRNA editing enzyme that deacylates mischarged D-aminoacyl-tRNAs. Also deacylates mischarged glycyl-tRNA(Ala), protecting cells against glycine mischarging by AlaRS. Acts via tRNA-based rather than protein-based catalysis; rejects L-amino acids rather than detecting D-amino acids in the active site. By recycling D-aminoacyl-tRNA to D-amino acids and free tRNA molecules, this enzyme counteracts the toxicity associated with the formation of D-aminoacyl-tRNA entities in vivo and helps enforce protein L-homochirality. This chain is D-aminoacyl-tRNA deacylase, found in Paraburkholderia xenovorans (strain LB400).